A 273-amino-acid polypeptide reads, in one-letter code: Acetyl-coenzyme A carboxylase carboxyl transferase subunit alpha (273 aa).

The region spanning 1 to 244 is the CoA carboxyltransferase C-terminal domain; it reads MKKATQSKAW…KVVLKQALDE (244 aa).

Belongs to the AccA family. As to quaternary structure, acetyl-CoA carboxylase is a heterohexamer composed of biotin carboxyl carrier protein (AccB), biotin carboxylase (AccC) and two subunits each of ACCase subunit alpha (AccA) and ACCase subunit beta (AccD).

It is found in the cytoplasm. It carries out the reaction N(6)-carboxybiotinyl-L-lysyl-[protein] + acetyl-CoA = N(6)-biotinyl-L-lysyl-[protein] + malonyl-CoA. Its pathway is lipid metabolism; malonyl-CoA biosynthesis; malonyl-CoA from acetyl-CoA: step 1/1. Functionally, component of the acetyl coenzyme A carboxylase (ACC) complex. First, biotin carboxylase catalyzes the carboxylation of biotin on its carrier protein (BCCP) and then the CO(2) group is transferred by the carboxyltransferase to acetyl-CoA to form malonyl-CoA. The polypeptide is Acetyl-coenzyme A carboxylase carboxyl transferase subunit alpha (Acinetobacter baumannii (strain AB0057)).